The chain runs to 103 residues: c-Myc-binding protein (103 aa).

This sequence belongs to the AMY1 family. Binds via its C-terminal region to the N-terminal region of MYC. Associates with AKAP1/S-AKAP84. Interacts with MYCBPAP. Interacts with CFAP91.

It is found in the cytoplasm. The protein resides in the nucleus. May control the transcriptional activity of MYC. Stimulates the activation of E box-dependent transcription by MYC. The protein is c-Myc-binding protein (Mycbp) of Mus musculus (Mouse).